Reading from the N-terminus, the 746-residue chain is Lysine-specific histone demethylase 1 homolog 2 (746 aa).

The interval 1 to 26 (MNSPASDETAPRRNRRKVSRKNYDEN) is disordered. In terms of domain architecture, SWIRM spans 51–152 (EKETETEALI…FGVSPLFAPY (102 aa)). Residues Glu189, Arg191, Arg197, and Glu569 each coordinate FAD.

Belongs to the flavin monoamine oxidase family. FAD is required as a cofactor. In terms of tissue distribution, expressed in the shoot and root apical regions of young seedlings. Expressed in inflorescences.

Functionally, probable histone demethylase that reduces the levels of histone H3 'Lys-4' methylation in chromatin of the floral repressor FLOWERING LOCUS C (FLC) and the sporophytically silenced floral repressor FWA. Seems to act in partial redundancy with FLOWERING LOCUS D (FLD) to repress FLC expression. Required for cytosine methylation of FWA. Controls primary seed dormancy by regulating DOG1 and abscisic acid signaling-related genes. This Arabidopsis thaliana (Mouse-ear cress) protein is Lysine-specific histone demethylase 1 homolog 2.